Here is a 780-residue protein sequence, read N- to C-terminus: Ino eighty subunit 1 (780 aa).

2 disordered regions span residues 1 to 25 and 563 to 780; these read MADV…QQIH and ANGP…PGWN. Residues 563–584 are compositionally biased toward basic and acidic residues; that stretch reads ANGPRRDRKKEREERQKAREEA. Positions 600–613 are enriched in basic residues; it reads SRARAQRNAKRKLA. Positions 614–635 are enriched in low complexity; the sequence is RAAAAASSTPSASTPKTAAARS. Composition is skewed to acidic residues over residues 676 to 686 and 723 to 751; these read LEGEESLDDID and DADD…EGDD.

In terms of assembly, component of the chromatin-remodeling INO80 complex.

It is found in the nucleus. Probably involved in transcription regulation via its interaction with the INO80 complex, a chromatin-remodeling complex. The chain is Ino eighty subunit 1 from Emericella nidulans (strain FGSC A4 / ATCC 38163 / CBS 112.46 / NRRL 194 / M139) (Aspergillus nidulans).